The following is a 212-amino-acid chain: Glycerol-3-phosphate acyltransferase (212 aa).

4 consecutive transmembrane segments (helical) span residues 3-23 (ILLA…VVVS), 78-98 (DVAV…PVFF), 115-135 (AVHP…AFFF), and 155-177 (FLFG…LLVW).

The protein belongs to the PlsY family. Probably interacts with PlsX.

The protein resides in the cell inner membrane. The enzyme catalyses an acyl phosphate + sn-glycerol 3-phosphate = a 1-acyl-sn-glycero-3-phosphate + phosphate. Its pathway is lipid metabolism; phospholipid metabolism. In terms of biological role, catalyzes the transfer of an acyl group from acyl-phosphate (acyl-PO(4)) to glycerol-3-phosphate (G3P) to form lysophosphatidic acid (LPA). This enzyme utilizes acyl-phosphate as fatty acyl donor, but not acyl-CoA or acyl-ACP. The polypeptide is Glycerol-3-phosphate acyltransferase (Burkholderia lata (strain ATCC 17760 / DSM 23089 / LMG 22485 / NCIMB 9086 / R18194 / 383)).